The sequence spans 233 residues: NADP-dependent glyceraldehyde-3-phosphate dehydrogenase (233 aa).

Residue 7-8 participates in substrate binding; the sequence is NY. Residues K30 and S33 each coordinate NADP(+). Position 83 to 87 (83 to 87) interacts with NAD(+); it reads GGDTG. E102 (proton acceptor) is an active-site residue. A substrate-binding site is contributed by 135-137; that stretch reads RCT. C136 functions as the Nucleophile in the catalytic mechanism. The NADP(+) site is built by E180 and E229.

It belongs to the aldehyde dehydrogenase family.

The protein localises to the cytoplasm. It catalyses the reaction D-glyceraldehyde 3-phosphate + NADP(+) + H2O = (2R)-3-phosphoglycerate + NADPH + 2 H(+). In terms of biological role, important as a means of generating NADPH for biosynthetic reactions. This chain is NADP-dependent glyceraldehyde-3-phosphate dehydrogenase (GapN), found in Scenedesmus vacuolatus (Green alga).